The primary structure comprises 933 residues: Phosphoenolpyruvate carboxylase (933 aa).

Residues His-164 and Lys-595 contribute to the active site.

This sequence belongs to the PEPCase type 1 family. Mg(2+) serves as cofactor.

It carries out the reaction oxaloacetate + phosphate = phosphoenolpyruvate + hydrogencarbonate. Its function is as follows. Forms oxaloacetate, a four-carbon dicarboxylic acid source for the tricarboxylic acid cycle. This is Phosphoenolpyruvate carboxylase from Rhodopseudomonas palustris (strain BisB5).